The primary structure comprises 308 residues: Cell division protein FtsQ (308 aa).

The Cytoplasmic segment spans residues 1-53 (MDSGGRIVYALNVEKTGFLRILSVTVLQRLYRRVFWFLFKCVAGIDVPRHAGS). A helical membrane pass occupies residues 54–74 (LAVFSFFFLSILYSISSGGYM). Over 75–308 (NHFMKVAISN…LLKMLKAGSV (234 aa)) the chain is Periplasmic. Residues 87-155 (FLVTHVDMSG…DRLRISLVER (69 aa)) form the POTRA domain.

It belongs to the FtsQ/DivIB family. FtsQ subfamily.

It is found in the cell inner membrane. Its function is as follows. Essential cell division protein. This Bartonella bacilliformis protein is Cell division protein FtsQ.